The chain runs to 64 residues: Cold shock protein CapA (64 aa).

A CSD domain is found at 7 to 64; it reads GTVKWFNDEKGFGFITPQGGGDDLFVHFKAIESDGFKSLKEGQTVSFVAEKGQKGMQA.

The protein localises to the cytoplasm. Functionally, affects cell viability at low temperatures. In Pseudomonas fragi, this protein is Cold shock protein CapA (capA).